We begin with the raw amino-acid sequence, 360 residues long: DNA replication and repair protein RecF (360 aa).

33–40 serves as a coordination point for ATP; sequence GENGSGKT.

This sequence belongs to the RecF family.

The protein resides in the cytoplasm. The RecF protein is involved in DNA metabolism; it is required for DNA replication and normal SOS inducibility. RecF binds preferentially to single-stranded, linear DNA. It also seems to bind ATP. In Rickettsia africae (strain ESF-5), this protein is DNA replication and repair protein RecF.